A 402-amino-acid chain; its full sequence is UPF0597 protein THA_1286 (402 aa).

Belongs to the UPF0597 family.

The chain is UPF0597 protein THA_1286 from Thermosipho africanus (strain TCF52B).